Reading from the N-terminus, the 484-residue chain is MNMKKATIAATAGIAVTAFAAPTIASASTVVVEAGDTLWGIAQSKGTTVDAIKKANNLTTDKIVPGQKLQVNNEVAAAEKTEKSVSATWLNVRSGAGVDNSIITSIKGGTKVTVETTESNGWHKITYNDGKTGFVNGKYLTDKAVSTPVAPTQEVKKETTTQQAAPAAETKTEVKQTTQATTPAPKVAETKETPVVDQNATTHAVKSGDTIWALSVKYGVSVQDIMSWNNLSSSSIYVGQKLAIKQTANTATPKAEVKTEAPAAEKQAAPVVKENTNTNTATTEKKETATQQQTAPKAPTEAAKPAPAPSTNTNANKTNTNTNTNTNTNNTNTNTPSKNTNTNSNTNTNTNSNTNANQGSSNNNSNSSASAIIAEAQKHLGKAYSWGGNGPTTFDCSGYTKYVFAKAGISLPRTSGAQYASTTRISESQAKPGDLVFFDYGSGISHVGIYVGNGQMINAQDNGVKYDNIHGSGWGKYLVGFGRV.

A signal peptide spans Met-1–Ala-27. A LysM 1 domain is found at Ser-28–Val-71. Residues Lys-80–Ala-144 form the SH3b domain. A disordered region spans residues Ala-150 to Glu-192. Over residues Thr-160–Glu-169 the composition is skewed to low complexity. Residues Thr-201–Ile-244 form the LysM 2 domain. The tract at residues Lys-254–Ser-367 is disordered. 2 stretches are compositionally biased toward low complexity: residues Lys-273–Thr-282 and Ala-289–Ser-367. A 19 X 2 AA tandem repeats of T-N region spans residues Thr-311–Asn-355. Positions Asn-366–Val-484 constitute a NlpC/P60 domain. Cys-396 (nucleophile) is an active-site residue. The active-site Proton acceptor is the His-446. Residue Asn-458 is part of the active site.

The protein belongs to the peptidase C40 family.

The protein resides in the cell surface. The protein localises to the secreted. Functionally, this major extracellular protein may be involved in the invasion of non-professional phagocytic cells by Listeria. This is Probable endopeptidase p60 (iap) from Listeria monocytogenes serovar 1/2a (strain ATCC BAA-679 / EGD-e).